A 361-amino-acid polypeptide reads, in one-letter code: Elongator complex protein 4 (361 aa).

Disordered stretches follow at residues Q93 to E124 and D338 to F361. Composition is skewed to polar residues over residues N104–P121 and I346–P355.

It belongs to the ELP4 family. Component of the elongator complex.

It is found in the cytoplasm. Its subcellular location is the nucleus. Its pathway is tRNA modification; 5-methoxycarbonylmethyl-2-thiouridine-tRNA biosynthesis. Component of the elongator complex, a multiprotein complex which is required for multiple tRNA modifications, including mcm5U (5-methoxycarbonylmethyl uridine), mcm5s2U (5-methoxycarbonylmethyl-2-thiouridine), and ncm5U (5-carbamoylmethyl uridine). The elongator complex catalyzes formation of carboxymethyluridine in the wobble base at position 34 in tRNAs. The polypeptide is Elongator complex protein 4 (Schizosaccharomyces pombe (strain 972 / ATCC 24843) (Fission yeast)).